Here is a 1984-residue protein sequence, read N- to C-terminus: Sodium channel protein type 9 subunit alpha (1984 aa).

Topologically, residues 1 to 125 (MAMLPPPGPQ…RRISIKILVH (125 aa)) are cytoplasmic. Positions 26-39 (RISEEKAKEHKDEK) are enriched in basic and acidic residues. The tract at residues 26-55 (RISEEKAKEHKDEKKDDEEEGPKPSSDLEA) is disordered. An I repeat occupies 112 to 410 (FSPLRRISIK…VAMAYEEQNQ (299 aa)). Residues 126 to 145 (SLFSMLIMCTILTNCIFMTL) traverse the membrane as a helical segment. Residues 146–150 (SNPPE) lie on the Extracellular side of the membrane. A helical membrane pass occupies residues 151–172 (WTKNVEYTFTGIYTFESLIKIL). At 173–185 (ARGFCVGEFTFLR) the chain is on the cytoplasmic side. Residues 186 to 204 (DPWNWLDFVVIVFAYLTEF) form a helical membrane-spanning segment. At 205-210 (VNLGNV) the chain is on the extracellular side. Residue asparagine 209 is glycosylated (N-linked (GlcNAc...) asparagine). The chain crosses the membrane as a helical span at residues 211-227 (SALRTFRVLRALKTISV). Over 228–241 (IPGLKTIVGALIQS) the chain is Cytoplasmic. A helical transmembrane segment spans residues 242–267 (VKKLSDVMILTVFCLSVFALIGLQLF). Residues 268–346 (MGNLKHKCFR…PDYGYTSFDT (79 aa)) are Extracellular-facing. A disulfide bond links cysteine 275 and cysteine 324. Asparagine 283 carries N-linked (GlcNAc...) asparagine glycosylation. An intramembrane region (pore-forming) is located at residues 347-363 (FSWAFLALFRLMTQDYW). Residues 364-376 (ENLYQQTLRAAGK) lie on the Extracellular side of the membrane. A helical transmembrane segment spans residues 377–402 (TYMIFFVVVIFLGSFYLINLILAVVA). The Cytoplasmic portion of the chain corresponds to 403-744 (MAYEEQNQAN…LIYFIVMDPF (342 aa)). Residues 461-471 (SSSETSRLSSK) show a composition bias toward low complexity. 2 disordered regions span residues 461–542 (SSSE…RGSL) and 576–609 (IFGD…RSPP). Residues 474-486 (KERRNRRKKKKQK) show a composition bias toward basic residues. The span at 489–509 (SGEEKGDDEKLSKSGSEESIR) shows a compositional bias: basic and acidic residues. An II repeat occupies 725 to 988 (CSPYWIKFKK…EEDTDANNLQ (264 aa)). The helical transmembrane segment at 745 to 761 (VDLAITICIVLNTLFMA) threads the bilayer. The Extracellular portion of the chain corresponds to 762 to 770 (MEHHPMTEE). A helical membrane pass occupies residues 771-795 (FKNVLAVGNLIFTGIFAAEMVLKLI). Residues 796 to 804 (AMDPYEYFQ) are Cytoplasmic-facing. Residues 805–821 (VGWNIFDSLIVTLSLIE) traverse the membrane as a helical segment. The Extracellular portion of the chain corresponds to 822-830 (LFLADVEGL). The helical transmembrane segment at 831 to 847 (SVLRSFRLLRVFKLAKS) threads the bilayer. Residues 848-864 (WPTLNMLIKIIGNSVGA) lie on the Cytoplasmic side of the membrane. A helical membrane pass occupies residues 865-887 (LGNLTLVLAIIVFIFAVVGMQLF). Residues 888–914 (GKSYKECVCKINVDCKLPRWHMNDFFH) are Extracellular-facing. A disulfide bridge links cysteine 896 with cysteine 902. The pore-forming intramembrane region spans 915–927 (SFLIVFRVLCGEW). At 928 to 939 (IETMWDCMEVAG) the chain is on the extracellular side. The cysteines at positions 934 and 943 are disulfide-linked. A helical transmembrane segment spans residues 940–966 (QTMCLIVYMMVMVIGNLVVLNLFLALL). Topologically, residues 967–1185 (LSSFSSDNLT…WWTIRKTCYR (219 aa)) are cytoplasmic. Disordered stretches follow at residues 1015 to 1040 (KKPK…ISNR) and 1103 to 1145 (EELS…EPVN). Residues 1019 to 1035 (GSKDTKRTADPNNKKEN) are compositionally biased toward basic and acidic residues. Over residues 1135–1145 (GEEEAEAEPVN) the composition is skewed to acidic residues. The III repeat unit spans residues 1178-1486 (TIRKTCYRIV…KKYYNAMKKL (309 aa)). Residues 1186–1210 (IVEHSWFESFIVLMILLSSGALAFE) form a helical membrane-spanning segment. Residues 1211–1222 (DIYIEKKKTIKI) lie on the Extracellular side of the membrane. A helical transmembrane segment spans residues 1223–1248 (ILEYADKIFTYIFILEMLLKWVAYGY). Residues 1249-1250 (KT) are Cytoplasmic-facing. A helical membrane pass occupies residues 1251 to 1276 (YFTNAWCWLDFLIVDVSLVTLVANTL). Residues 1277 to 1285 (GYSDLGPIK) lie on the Extracellular side of the membrane. Residues 1286-1302 (SLRTLRALRPLRALSRF) form a helical membrane-spanning segment. Residues 1303–1315 (EGMRVVVNALIGA) lie on the Cytoplasmic side of the membrane. The helical transmembrane segment at 1316–1340 (IPSIMNVLLVCLIFWLIFSIMGVNL) threads the bilayer. Residues 1341-1392 (FAGKFYECVNTTDGSRFPTSQVANRSECFALMNVSGNVRWKNLKVNFDNVGL) are Extracellular-facing. A disulfide bridge connects residues cysteine 1348 and cysteine 1368. N-linked (GlcNAc...) asparagine glycans are attached at residues asparagine 1350, asparagine 1364, and asparagine 1373. The pore-forming intramembrane region spans 1393–1403 (GYLSLLQVATF). At 1404–1429 (KGWMDIMYAAVDSVNVNEQPKYEYSL) the chain is on the extracellular side. A helical membrane pass occupies residues 1430–1455 (YMYIYFVIFIIFGSFFTLNLFIGVII). The Cytoplasmic segment spans residues 1456-1512 (DNFNQQKKKLGGQDIFMTEEQKKYYNAMKKLGSKKPQKPIPRPGNKFQGCIFDLVTN). Serine 1488 carries the phosphoserine; by PKC modification. One copy of the IV repeat lies at 1495-1793 (IPRPGNKFQG…WEKFDPDATQ (299 aa)). The helical transmembrane segment at 1513 to 1532 (QAFDITIMVLICLNMVTMMV) threads the bilayer. Over 1533–1543 (EKEGQTEYMDY) the chain is Extracellular. Residues 1544-1565 (VLHWINMVFIILFTGECVLKLI) form a helical membrane-spanning segment. The Cytoplasmic segment spans residues 1566 to 1574 (SLRHYYFTV). A helical transmembrane segment spans residues 1575 to 1596 (GWNIFDFVVVILSIVGMFLAEM). The Extracellular segment spans residues 1597–1605 (IEKYFVSPT). Residues 1606-1625 (LFRVIRLARIGRILRLIKGA) traverse the membrane as a helical segment. At 1626-1638 (KGIRTLLFALMMS) the chain is on the cytoplasmic side. A helical membrane pass occupies residues 1639-1661 (LPALFNIGLLLFLVMFIYAIFGM). Residues 1662–1684 (SNFAYVKKEAGINDMFNFETFGN) lie on the Extracellular side of the membrane. Positions 1685–1697 (SMICLFQITTSAG) form an intramembrane region, pore-forming. Residues 1698-1731 (WDGLLAPILNSAPPDCDPKKVHPGSSVEGDCGNP) lie on the Extracellular side of the membrane. A disulfide bridge connects residues cysteine 1713 and cysteine 1728. A helical transmembrane segment spans residues 1732–1757 (SVGIFYFVSYIIISFLVVVNMYIAVI). At 1758 to 1984 (LENFSVATEE…EDKEKDESRK (227 aa)) the chain is on the cytoplasmic side. Residues 1887–1916 (EEVSATIIQRAYRRYRLRQHVKNISSIYIK) enclose the IQ domain. Basic and acidic residues predominate over residues 1916–1930 (KDGDRDDDLPNKEDT). Residues 1916–1984 (KDGDRDDDLP…EDKEKDESRK (69 aa)) form a disordered region. Polar residues predominate over residues 1946–1958 (VTASTISPPSYDS). Positions 1960–1984 (TKPDQEKYETDKTEKEDKEKDESRK) are enriched in basic and acidic residues.

Belongs to the sodium channel (TC 1.A.1.10) family. Nav1.7/SCN9A subfamily. As to quaternary structure, the Nav1.7 voltage-gated sodium channel consists of an ion-conducting alpha subunit SCN9A which is functional on its own regulated by one or more beta-1 (SCN1B), beta-2 (SCN2B), beta-3 (SCN3B) and beta-4 (SCN4B) subunits. SCN1B and SCN3B are non-covalently associated with SCN9A. SCN2B and SCN4B are disulfide-linked to SCN9A. SCN1B regulates channel inactivation. Interacts with NEDD4 and NEDD4L; regulates Nav1.7 activity most probably through ubiquitination and subsequent endocytosis. Interacts with TMEM233; modulates the gating properties of NaV1.7. Post-translationally, phosphorylation at Ser-1488 by PKC in a highly conserved cytoplasmic loop increases peak sodium currents. Ubiquitinated by NEDD4L; which may promote its endocytosis. Does not seem to be ubiquitinated by NEDD4. In terms of processing, ubiquitinated by NEDD4L; which may promote its endocytosis. Expressed at high level in the dorsal root ganglion and at much lower levels in the brain, sciatic nerve, nodose ganglia, heart, thyroid and adrenal glands and Schwann cells, but not in the cardiac and skeletal muscles, brain and liver.

The protein localises to the cell membrane. Its subcellular location is the cell projection. The protein resides in the neuron projection. It localises to the axon. The enzyme catalyses Na(+)(in) = Na(+)(out). With respect to regulation, inhibited by the conotoxin GVIIJ. Pore-forming subunit of Nav1.7, a voltage-gated sodium (Nav) channel that directly mediates the depolarizing phase of action potentials in excitable membranes. Navs, also called VGSCs (voltage-gated sodium channels) or VDSCs (voltage-dependent sodium channels), operate by switching between closed and open conformations depending on the voltage difference across the membrane. In the open conformation they allow Na(+) ions to selectively pass through the pore, along their electrochemical gradient. The influx of Na(+) ions provokes membrane depolarization, initiating the propagation of electrical signals throughout cells and tissues. Nav1.7 plays a crucial role in controlling the excitability and action potential propagation from nociceptor neurons, thereby contributing to the sensory perception of pain. This chain is Sodium channel protein type 9 subunit alpha, found in Rattus norvegicus (Rat).